We begin with the raw amino-acid sequence, 709 residues long: Nicastrin (709 aa).

Positions 1-33 (MATAGGGSGADPGSRGLLRLLSFCVLLAGLCRG) are cleaved as a signal peptide. Topologically, residues 34–669 (NSVERKIYIP…IFLIASKELE (636 aa)) are extracellular. N-linked (GlcNAc...) asparagine glycans are attached at residues Asn-45 and Asn-55. Intrachain disulfides connect Cys-50–Cys-62 and Cys-140–Cys-159. N-linked (GlcNAc...) asparagine glycans are attached at residues Asn-187, Asn-200, and Asn-204. 2 disulfides stabilise this stretch: Cys-195–Cys-213 and Cys-230–Cys-248. Asn-264, Asn-387, Asn-417, Asn-435, Asn-464, Asn-506, Asn-530, Asn-562, Asn-573, Asn-580, and Asn-612 each carry an N-linked (GlcNAc...) asparagine glycan. An intrachain disulfide couples Cys-586 to Cys-620. A helical transmembrane segment spans residues 670–690 (LITLTVGFGILIFSLIVTYCI). Residues 691-709 (NAKADVLFIAPREPGAVSY) are Cytoplasmic-facing.

This sequence belongs to the nicastrin family. As to quaternary structure, component of the gamma-secretase complex. The functional gamma-secretase complex is composed of at least four polypeptides: a presenilin homodimer (PSEN1 or PSEN2), nicastrin (NCSTN), APH1 (APH1A or APH1B) and PSENEN/PEN2. Binds to proteolytic processed C-terminal fragments C83 and C99 of the amyloid precursor protein (APP). Interacts with PSEN1 and PSEN2. In terms of processing, N-glycosylated. As to expression, detected in brain (at protein level). Widely expressed.

It is found in the membrane. Its subcellular location is the cytoplasmic vesicle membrane. It localises to the melanosome. Its function is as follows. Essential subunit of the gamma-secretase complex, an endoprotease complex that catalyzes the intramembrane cleavage of integral membrane proteins such as Notch receptors and APP (amyloid-beta precursor protein). The gamma-secretase complex plays a role in Notch and Wnt signaling cascades and regulation of downstream processes via its role in processing key regulatory proteins, and by regulating cytosolic CTNNB1 levels. This chain is Nicastrin (NCSTN), found in Homo sapiens (Human).